The primary structure comprises 215 residues: Rod-determining factor A (215 aa).

Its function is as follows. Involved in cell-shape determination. Required for the formation of rods and wild-type-like motility. In Haloferax volcanii (strain ATCC 29605 / DSM 3757 / JCM 8879 / NBRC 14742 / NCIMB 2012 / VKM B-1768 / DS2) (Halobacterium volcanii), this protein is Rod-determining factor A.